The following is a 75-amino-acid chain: Large ribosomal subunit protein bL31 (75 aa).

It belongs to the bacterial ribosomal protein bL31 family. Type A subfamily. As to quaternary structure, part of the 50S ribosomal subunit.

In terms of biological role, binds the 23S rRNA. In Chlorobium limicola (strain DSM 245 / NBRC 103803 / 6330), this protein is Large ribosomal subunit protein bL31.